Reading from the N-terminus, the 301-residue chain is 3-methyl-2-oxobutanoate hydroxymethyltransferase (301 aa).

A compositionally biased stretch (low complexity) spans 1–28; sequence MATSNSSDSSMSAEVPAPYGNGPANAPA. Residues 1–37 are disordered; the sequence is MATSNSSDSSMSAEVPAPYGNGPANAPATPSDTAKKP. Positions 82 and 121 each coordinate Mg(2+). Residues 82-83, Asp-121, and Lys-151 each bind 3-methyl-2-oxobutanoate; that span reads DS. Glu-153 serves as a coordination point for Mg(2+). Catalysis depends on Glu-219, which acts as the Proton acceptor.

It belongs to the PanB family. In terms of assembly, homodecamer; pentamer of dimers. Requires Mg(2+) as cofactor.

Its subcellular location is the cytoplasm. It catalyses the reaction 3-methyl-2-oxobutanoate + (6R)-5,10-methylene-5,6,7,8-tetrahydrofolate + H2O = 2-dehydropantoate + (6S)-5,6,7,8-tetrahydrofolate. The protein operates within cofactor biosynthesis; (R)-pantothenate biosynthesis; (R)-pantoate from 3-methyl-2-oxobutanoate: step 1/2. Its function is as follows. Catalyzes the reversible reaction in which hydroxymethyl group from 5,10-methylenetetrahydrofolate is transferred onto alpha-ketoisovalerate to form ketopantoate. The protein is 3-methyl-2-oxobutanoate hydroxymethyltransferase of Arthrobacter sp. (strain FB24).